We begin with the raw amino-acid sequence, 103 residues long: MYAVFQSGGKQHRVAEGQIVRLEKLNVETGATIDFNEVLMVAVGDTFKVGAPFVEGGKVVAEVVAHGRGEKVTIVKFRRRKHHRKQAGHRQWFTEVKITGISA.

This sequence belongs to the bacterial ribosomal protein bL21 family. In terms of assembly, part of the 50S ribosomal subunit. Contacts protein L20.

Functionally, this protein binds to 23S rRNA in the presence of protein L20. The protein is Large ribosomal subunit protein bL21 of Aeromonas salmonicida (strain A449).